A 427-amino-acid chain; its full sequence is Glutamate-1-semialdehyde 2,1-aminomutase (427 aa).

Residue K265 is modified to N6-(pyridoxal phosphate)lysine.

Belongs to the class-III pyridoxal-phosphate-dependent aminotransferase family. HemL subfamily. As to quaternary structure, homodimer. The cofactor is pyridoxal 5'-phosphate.

It is found in the cytoplasm. It catalyses the reaction (S)-4-amino-5-oxopentanoate = 5-aminolevulinate. Its pathway is porphyrin-containing compound metabolism; protoporphyrin-IX biosynthesis; 5-aminolevulinate from L-glutamyl-tRNA(Glu): step 2/2. The sequence is that of Glutamate-1-semialdehyde 2,1-aminomutase from Pseudomonas putida (strain GB-1).